We begin with the raw amino-acid sequence, 2188 residues long: Genome polyprotein (2188 aa).

The Cell attachment site motif lies at 772 to 774 (RGD). An LRAT domain is found at 795 to 889 (LAYLDRGFYK…DIFGTHTLSQ (95 aa)). Residue histidine 805 is the For protein 2A H-NC of the active site. Cysteine 874 functions as the For protein 2A H-NC; Acyl-thioester intermediate in the catalytic mechanism. An SF3 helicase domain is found at 1165–1326 (FQELARIPNR…KAYSKSGKLN (162 aa)). 1193–1200 (GEPGQGKS) serves as a coordination point for ATP. Tyrosine 1502 bears the O-(5'-phospho-RNA)-tyrosine mark. A Peptidase C3 domain is found at 1526–1716 (APYDGQLEHI…IPFNFLKNDM (191 aa)). Active-site for protease 3C activity residues include histidine 1566, aspartate 1604, and cysteine 1678. Cysteine 1905 functions as the Acyl-thioester intermediate in the catalytic mechanism. In terms of domain architecture, RdRp catalytic spans 1953 to 2067 (DYNYEMDYSQ…SLDREIEPER (115 aa)). Positions 1959 and 2053 each coordinate Mg(2+).

This sequence belongs to the picornaviruses polyprotein family. In terms of assembly, interacts with capsid protein VP1 and capsid protein VP3 to form heterotrimeric protomers. Five protomers subsequently associate to form pentamers which serve as building blocks for the capsid. Interacts with capsid protein VP0, and capsid protein VP3 to form heterotrimeric protomers. Five protomers subsequently associate to form pentamers which serve as building blocks for the capsid. As to quaternary structure, interacts with capsid protein VP0 and capsid protein VP1 to form heterotrimeric protomers. Five protomers subsequently associate to form pentamers which serve as building blocks for the capsid. In terms of assembly, homohexamer; forms a hexameric ring structure with 6-fold symmetry characteristic of AAA+ ATPases. Homodimer. Interacts with host ACBD3. As to quaternary structure, interacts with RNA-directed RNA polymerase. In terms of assembly, interacts with Viral protein genome-linked. Requires Mg(2+) as cofactor. VPg is uridylylated by the polymerase and is covalently linked to the 5'-end of genomic RNA. This uridylylated form acts as a nucleotide-peptide primer for the polymerase. Post-translationally, specific enzymatic cleavages yield mature proteins. All cleavages are catalyzed by P3C.

The protein resides in the virion. Its subcellular location is the host cytoplasm. The protein localises to the host nucleus. It localises to the host nucleolus. It is found in the host cytoplasmic vesicle membrane. It catalyses the reaction RNA(n) + a ribonucleoside 5'-triphosphate = RNA(n+1) + diphosphate. It carries out the reaction a ribonucleoside 5'-triphosphate + H2O = a ribonucleoside 5'-diphosphate + phosphate + H(+). The catalysed reaction is Selective cleavage of Gln-|-Gly bond in the poliovirus polyprotein. In other picornavirus reactions Glu may be substituted for Gln, and Ser or Thr for Gly.. Its function is as follows. Forms an icosahedral capsid of pseudo T=3 symmetry together with capsid proteins VP1 and VP3. The capsid is 300 Angstroms in diameter, composed of 60 copies of each capsid protein and enclosing the viral positive strand RNA genome. Capsid proteins interact with host alpha-V/beta-3 integrin heterodimer to provide virion attachment target cell. This attachment induces virion internalization predominantly through clathrin-mediated endocytosis. Binds packaging signals present in the viral RNA. In terms of biological role, forms an icosahedral capsid of pseudo T=3 symmetry together with capsid proteins VP0 and VP1. The capsid is 300 Angstroms in diameter, composed of 60 copies of each capsid protein and enclosing the viral positive strand RNA genome. Capsid proteins interact with host alpha-V/beta-3 integrin heterodimer to provide virion attachment target cell. This attachment induces virion internalization predominantly through clathrin-mediated endocytosis. Binds packaging signals present in the viral RNA. Forms an icosahedral capsid of pseudo T=3 symmetry together with capsid proteins VP0 and VP3. The capsid is 300 Angstroms in diameter, composed of 60 copies of each capsid protein and enclosing the viral positive strand RNA genome. Capsid proteins interact with host alpha-V/beta-3 integrin heterodimer to provide virion attachment target cell. This attachment induces virion internalization predominantly through clathrin-mediated endocytosis. Binds packaging signals present in the viral RNA. Functionally, is not a protease. Its function is as follows. Plays an essential role in the virus replication cycle by acting as a viroporin. Creates a pore in the host endoplasmic reticulum and as a consequence releases Ca2+ in the cytoplasm of infected cell. In turn, high levels of cytoplasmic calcium may trigger membrane trafficking and transport of viral ER-associated proteins to viroplasms, sites of viral genome replication. In terms of biological role, induces and associates with structural rearrangements of intracellular membranes. Displays RNA-binding, nucleotide binding and NTPase activities. May play a role in virion morphogenesis and viral RNA encapsidation by interacting with the capsid protein VP3. Localizes the viral replication complex to the surface of membranous vesicles. It inhibits host cell endoplasmic reticulum-to-Golgi apparatus transport and causes the disassembly of the Golgi complex, possibly through GBF1 interaction. This would result in depletion of MHC, trail receptors and IFN receptors at the host cell surface. Plays an essential role in viral RNA replication by recruiting ACBD3 and PI4KB at the viral replication sites, thereby allowing the formation of the rearranged membranous structures where viral replication takes place. Functionally, acts as a primer for viral RNA replication and remains covalently bound to viral genomic RNA. VPg is uridylylated prior to priming replication into VPg-pUpU. The VPg-pUpU is then used as primer on the genomic RNA poly(A) by the RNA-dependent RNA polymerase to replicate the viral genome. Following genome release from the infecting virion in the cytoplasm, the VPg-RNA linkage is probably removed by host TDP2. During the late stage of the replication cycle, host TDP2 is excluded from sites of viral RNA synthesis and encapsidation, allowing for the generation of progeny virions. Its function is as follows. Cysteine protease that generates mature viral proteins from the precursor polyprotein. In addition to its proteolytic activity, it binds to viral RNA, and thus influences viral genome replication. RNA and substrate bind cooperatively to the protease. In terms of biological role, replicates the viral genomic RNA on the surface of intracellular membranes. Covalently attaches UMP to a tyrosine of VPg, which is used to prime RNA synthesis. The positive stranded RNA genome is first replicated at virus induced membranous vesicles, creating a dsRNA genomic replication form. This dsRNA is then used as template to synthesize positive stranded RNA genomes. ss(+)RNA genomes are either translated, replicated or encapsidated. The protein is Genome polyprotein of Human parechovirus 5 (strain CT86-6760) (HPeV-5).